We begin with the raw amino-acid sequence, 306 residues long: MRVLFAGTPAVAVPSLDALVKAGFDVVAVLTRPDAPVGRKRVLTPSPVAARAMELGIDVIRAARVDADTTAGIAKYAPDVAAIVAYGGIVPKAALGVPTHGWVNLHFSLLPAWRGAAPVQRSIIAGDDVTGAATFQLEEGLDTGPVFGTLTETVRPEDTAGDLLERLSISGAVLLSQTLSAIDAGQAAPQPQIGEVSHAPKLTLDDGRLDWQQPALALNRRARGVTPEPGAWTTLDGQRVKLEPVALRPEVKDLPPGSIRVDGKSVLVGTGSHAVELGRVQPAGKKMMPPADWARGLATPERVVFE.

108 to 111 serves as a coordination point for (6S)-5,6,7,8-tetrahydrofolate; the sequence is SLLP.

The protein belongs to the Fmt family.

The catalysed reaction is L-methionyl-tRNA(fMet) + (6R)-10-formyltetrahydrofolate = N-formyl-L-methionyl-tRNA(fMet) + (6S)-5,6,7,8-tetrahydrofolate + H(+). Functionally, attaches a formyl group to the free amino group of methionyl-tRNA(fMet). The formyl group appears to play a dual role in the initiator identity of N-formylmethionyl-tRNA by promoting its recognition by IF2 and preventing the misappropriation of this tRNA by the elongation apparatus. The sequence is that of Methionyl-tRNA formyltransferase from Paenarthrobacter aurescens (strain TC1).